The chain runs to 73 residues: uncharacterized protein (73 aa).

This sequence belongs to the asfivirus I73R family.

The protein localises to the virion. This is an uncharacterized protein from Ornithodoros (relapsing fever ticks).